The following is a 109-amino-acid chain: U4-lycotoxin-Ls1c (109 aa).

Residues 1–22 (MKVLVLFSVLFLTLFSYSSTEA) form the signal peptide. Positions 23–44 (IDEFDSDAEDDMLSLMANEQVR) are excised as a propeptide. The knottin domain stretch occupies residues 45 to 88 (AKACTPRLHDCSHDRHSCCRGELFKDVCYCFYPEGEDITEVCSC). Cystine bridges form between Cys48-Cys63, Cys55-Cys72, Cys62-Cys88, and Cys74-Cys86. Residues 89 to 108 (QQPKSHKYIEKVVDKAKTVV) form a linear cationic cytotoxin domain region.

It belongs to the neurotoxin 19 (CSTX) family. 05 (U4-Lctx) subfamily. As to expression, expressed by the venom gland.

Its subcellular location is the secreted. Its function is as follows. Enhances the high-affinity desensitization of human P2RX3 purinoceptors. The sequence is that of U4-lycotoxin-Ls1c from Lycosa singoriensis (Wolf spider).